Here is a 558-residue protein sequence, read N- to C-terminus: Glypican-1 (558 aa).

Positions 1-23 (MELRARGWWLLCAAAALVACARG) are cleaved as a signal peptide. Cystine bridges form between Cys-32–Cys-68, Cys-62–Cys-256, Cys-69–Cys-259, Cys-191–Cys-343, Cys-246–Cys-279, Cys-268–Cys-415, and Cys-272–Cys-401. N-linked (GlcNAc...) asparagine glycosylation is found at Asn-79 and Asn-116. Residues 341–374 (QGCGNPKVNPQGPGPEEKRRRGKLAPRERPPSGT) form a disordered region. Over residues 355–370 (PEEKRRRGKLAPRERP) the composition is skewed to basic and acidic residues. O-linked (Xyl...) (heparan sulfate) serine glycosylation is found at Ser-486, Ser-488, and Ser-490. Residues 505–534 (RKSSSSRTPLTHALPGLSEQEGQKTSAASC) form a disordered region. Ser-530 carries GPI-anchor amidated serine lipidation. Positions 531–558 (AASCPQPPTFLLPLLLFLALTVARPRWR) are cleaved as a propeptide — removed in mature form.

Belongs to the glypican family. S-nitrosylated in a Cu(2+)-dependent manner. Nitric acid (NO) is released from the nitrosylated cysteines by ascorbate or by some other reducing agent, in a Cu(2+) or Zn(2+) dependent manner. This free nitric oxide is then capable of cleaving the heparan sulfate side chains. In terms of processing, N- and O-glycosylated. N-glycosylation is mainly of the complex type containing sialic acid. O-glycosylated with heparan sulfate. The heparan sulfate chains can be cleaved either by the action of heparanase or, degraded by a deaminative process that uses nitric oxide (NO) released from the S-nitrosylated cysteines. This process is triggered by ascorbate, or by some other reducing agent, in a Cu(2+)- or Zn(2+) dependent manner. Cu(2+) ions are provided by ceruloproteins such as APP, PRNP or CP which associate with GCP1 in intracellular compartments or lipid rafts. Post-translationally, this cell-associated glypican is further processed to give rise to a medium-released species.

It localises to the cell membrane. It is found in the endosome. The protein resides in the secreted. Its subcellular location is the extracellular space. Its function is as follows. Cell surface proteoglycan that bears heparan sulfate. Binds, via the heparan sulfate side chains, alpha-4 (V) collagen and participates in Schwann cell myelination. May act as a catalyst in increasing the rate of conversion of prion protein PRPN(C) to PRNP(Sc) via associating (via the heparan sulfate side chains) with both forms of PRPN, targeting them to lipid rafts and facilitating their interaction. Required for proper skeletal muscle differentiation by sequestering FGF2 in lipid rafts preventing its binding to receptors (FGFRs) and inhibiting the FGF-mediated signaling. This chain is Glypican-1 (GPC1), found in Homo sapiens (Human).